Here is a 161-residue protein sequence, read N- to C-terminus: Cell division protein SepF (161 aa).

This sequence belongs to the SepF family. In terms of assembly, homodimer. Interacts with FtsZ.

Its subcellular location is the cytoplasm. Its function is as follows. Cell division protein that is part of the divisome complex and is recruited early to the Z-ring. Probably stimulates Z-ring formation, perhaps through the cross-linking of FtsZ protofilaments. Its function overlaps with FtsA. This chain is Cell division protein SepF, found in Finegoldia magna (strain ATCC 29328 / DSM 20472 / WAL 2508) (Peptostreptococcus magnus).